A 175-amino-acid chain; its full sequence is Small ribosomal subunit protein uS7 (175 aa).

It belongs to the universal ribosomal protein uS7 family. Part of the 30S ribosomal subunit. Contacts proteins S9 and S11.

One of the primary rRNA binding proteins, it binds directly to 16S rRNA where it nucleates assembly of the head domain of the 30S subunit. Is located at the subunit interface close to the decoding center, probably blocks exit of the E-site tRNA. The chain is Small ribosomal subunit protein uS7 from Neorickettsia sennetsu (strain ATCC VR-367 / Miyayama) (Ehrlichia sennetsu).